A 394-amino-acid polypeptide reads, in one-letter code: Chaperone protein DnaJ (394 aa).

A J domain is found at 4–68 (DYYEILGVSR…ELKARYDRFG (65 aa)). Residues 136–218 (GGEKQIRISH…CNGEGLAQTT (83 aa)) form a CR-type zinc finger. Zn(2+)-binding residues include C149, C152, C166, C169, C192, C195, C206, and C209. 4 CXXCXGXG motif repeats span residues 149–156 (CNVCGGSG), 166–173 (CPTCGGSG), 192–199 (CPTCGGSG), and 206–213 (CYNCNGEG).

This sequence belongs to the DnaJ family. In terms of assembly, homodimer. Zn(2+) serves as cofactor.

It is found in the cytoplasm. Functionally, participates actively in the response to hyperosmotic and heat shock by preventing the aggregation of stress-denatured proteins and by disaggregating proteins, also in an autonomous, DnaK-independent fashion. Unfolded proteins bind initially to DnaJ; upon interaction with the DnaJ-bound protein, DnaK hydrolyzes its bound ATP, resulting in the formation of a stable complex. GrpE releases ADP from DnaK; ATP binding to DnaK triggers the release of the substrate protein, thus completing the reaction cycle. Several rounds of ATP-dependent interactions between DnaJ, DnaK and GrpE are required for fully efficient folding. Also involved, together with DnaK and GrpE, in the DNA replication of plasmids through activation of initiation proteins. This is Chaperone protein DnaJ from Synechococcus sp. (strain JA-2-3B'a(2-13)) (Cyanobacteria bacterium Yellowstone B-Prime).